A 653-amino-acid chain; its full sequence is PAN2-PAN3 deadenylation complex subunit PAN3 (653 aa).

Disordered stretches follow at residues 1–21 (MASDSRRGTGSPKMKGRENAK) and 45–128 (HDPN…AAPD). The segment at 19 to 48 (NAKDTLCRNVTIYGRCRYEDKGCVYNHDPN) adopts a C3H1-type zinc-finger fold. Positions 68 to 95 (SFTPSLLSSNGSSPTSSSATLKKTTTIS) are enriched in low complexity. A compositionally biased stretch (polar residues) spans 108–119 (GISSRSNASTPS). Residues 256–516 (QTLPNTQLPA…TIDIFITGIS (261 aa)) form a pseudokinase domain region. ATP contacts are provided by residues Arg-308, 357 to 364 (DYHPLSKT), and 416 to 417 (SK). Residues 517 to 555 (SQLMSTFDSALHMDDQLTSDLSRELENGRLVRLMTKLNF) adopt a coiled-coil conformation. The interval 556–653 (INERPEYEHD…ALLKPTRRVH (98 aa)) is knob domain.

Belongs to the protein kinase superfamily. PAN3 family. In terms of assembly, homodimer. Forms a heterotrimer with a catalytic subunit pan2 to form the poly(A)-nuclease (PAN) deadenylation complex. Interacts (via PAM-2 motif) with poly(A)-binding protein pab1 (via PABC domain), conferring substrate specificity of the enzyme complex.

It localises to the cytoplasm. Regulatory subunit of the poly(A)-nuclease (PAN) deadenylation complex, one of two cytoplasmic mRNA deadenylases involved in mRNA turnover. PAN specifically shortens poly(A) tails of RNA and the activity is stimulated by poly(A)-binding protein pab1. PAN deadenylation is followed by rapid degradation of the shortened mRNA tails by the CCR4-NOT complex. Deadenylated mRNAs are then degraded by two alternative mechanisms, namely exosome-mediated 3'-5' exonucleolytic degradation, or deadenylation-dependent mRNA decaping and subsequent 5'-3' exonucleolytic degradation by xrn1. May also be involved in post-transcriptional maturation of mRNA poly(A) tails. pan3 acts as a positive regulator for PAN activity, recruiting the catalytic subunit pan2 to mRNA via its interaction with RNA and with pab1. In Aspergillus terreus (strain NIH 2624 / FGSC A1156), this protein is PAN2-PAN3 deadenylation complex subunit PAN3.